The primary structure comprises 162 residues: uncharacterized protein (162 aa).

The first 24 residues, 1 to 24, serve as a signal peptide directing secretion; it reads MCKRFKFLLAVSALFISITVVLAG. C25 carries N-palmitoyl cysteine lipidation. A lipid anchor (S-diacylglycerol cysteine) is attached at C25.

The protein localises to the cell membrane. This is an uncharacterized protein from Bacillus anthracis.